Reading from the N-terminus, the 1729-residue chain is MVGELRYREFRVPLGPGLHAYPDELIRQRVGHDGHPEYQIRWLILRRGDEGDGGSGQVDCKAEHILLWMSKDEIYANCHKMLGEDGQVIGPSQESTGEVGALDKSVLEEMETDVKSLIQRALRQLEECVGTIPPAPLLHTVHVLSAYASIEPLTGVFKDPRVLDLLMHMLSSPDYQIRWSAGRMIQALSSHDAGEGQCGEEGKAGEELGRLRDSQDTVAGASDLIRTRTQILLSLSQQEAIEKHLDFDSRCALLALFAQATLSEHPMSFEGIQLPQVPGRVLFSLVKRYLHVTSLLDQLNDSAAEPGAQNTSAPEEWSGERGQLELEFSMAMGTLISELVQAIRWDQASDRPRSSARSPGSIFQPQLADVSPGLPATQAQPSFRRSRHFRPRSEFASGNTYALYVRDTLQPGMRVRMLDEYEEISAGDEGEFRQSNNGVPPVQVLWESTGRTYWVHWHMLEILGFEEDIEDMVEADEYQGAVASRVLGRALPAWRWRPMTELYAVPYVLPEDEDSEECEHLTLAEWWELLFFIKKLDGPDHQEVLQILQENLDGEILDDEILAELAVPIELAQDLLLTLPQRLNDSALRDLINCHVYKKYGPEALAGNPAYPSLLEAQEDVLLEAQAQAKDSEDAAKVEAKEPPSQSPNTPLQRLVEGYGPAGKILLDLEQALSSEGTQENKVKPLLLQLQRQPQPFLALMQSLDTPETNRTLHLTVLRILKQLVDFPEALLLPWHEAVDACMACLRSPNTDREVLQELIFFLHRLTSVSRDYAVVLNQLGARDAISKALEKHLGKLELAQELRDMVFKCEKHAHLYRELITNILGGCIQMVLGQIEDHRRTHRPINIPFFDVFLRYLCQGSSVEVKEDKCWEKVEVSSNPHRASKLTDRNPKTYWESNGSAGSRYITLHMRQGILIRQLTLLVASEDSSYMPARVVVCGGDSTSSLHTELNSVNVMPSASRVILLENLTRFWPIIQIRIKRCQQGGIDTRIRGLETLGPKPTFWPVFREQLCRHTRLFYMVRAQAWSQDMAEDRRSLLHLSSRLNGALRQEQNFADRFLPDNEAAQALGKTCWEALVSPVVQNITSPDEDGISPLGWLLDQYLECQEAVFNPQSRGPAFFSRVRRLTHLLVHVEPCEAPPPVVATPRPKGRNRSHDWSSLATRGLPSSIMRNLTRCRRAVVEKQVNNFLTSSWRDDDFVPRYCEHFNILQNSSSELFGPRAAFLLALQNGCAGALLKLPFLKAAHVSEQFARHIDQQIQGSRIGGAQEMERLAQLQQCLQAVLIFSGLEIATTFEHYYQHYMADRLLGVVSSWLEGAVLEQIGPCFPNRLPQQMLQSLSTSKELQRQFHVYQLQQLDQELLKLEDTEKKIQVGHGASGKEHKSEKEEEAGAAAAVDVAEGEEEEEENEDLYYEGAMPEVSVLVLSRHCWPVASICHTLNPRTCLPSYLRGTLNRYSNFYNKSQSHPALERGSQRRLQWTWLGWAELQFGNQTLHVSTVQMWLLLYLNDLKAVSVESLLALSGLSADMLNQAIGPLTSSRGPLDLHEQKDIPGGVLKIRDGSKEPRSRWDIVRLIPPQTYLQAEGEEGRNLEKRRNLLNCLIVRILKAHGDEGLHIDQLVCLVLEAWQKGPCPPRGLVSSLGKGSACSSTDVLSCILHLLGKGTLRRHDDRPQVLSYAVPVTVMEPHTESLNPGSSGPNPPLTFHTVQIRSRGVPYASCTATQSFSTFR.

The segment at 350 to 388 is disordered; sequence DRPRSSARSPGSIFQPQLADVSPGLPATQAQPSFRRSRH. Ser-371 bears the Phosphoserine mark. The region spanning 392-465 is the CPH domain; it reads RSEFASGNTY…HWHMLEILGF (74 aa). Positions 632 to 642 are enriched in basic and acidic residues; the sequence is SEDAAKVEAKE. The disordered stretch occupies residues 632 to 654; it reads SEDAAKVEAKEPPSQSPNTPLQR. One can recognise a DOC domain in the interval 845 to 1024; the sequence is PINIPFFDVF…HTRLFYMVRA (180 aa). The segment at 1373–1405 is disordered; the sequence is VGHGASGKEHKSEKEEEAGAAAAVDVAEGEEEE. A Glycyl lysine isopeptide (Lys-Gly) (interchain with G-Cter in NEDD8) cross-link involves residue Lys-1607.

Belongs to the cullin family. As to quaternary structure, component of the 3M complex, composed of core components CUL7, CCDC8 and OBSL1. Component of the Cul7-RING(FBXW8) complex consisting of CUL7, RBX1, SKP1 and FBXW8. Within the Cul7-RING(FBXW8) complex interacts with FBXW8 and RBX1, but not with SKP1. Interacts with CUL1 (via the C-terminal domain); the interaction seems to be mediated by FBXW8; it is likely specific to FBXW8, but not other F-box proteins. Interacts (via the CPH domain) with p53/TP53; the interaction preferentially involves tetrameric and dimeric p53/TP53; this interaction recruits p53/TP53 for ubiquitination by neddylated CUL1-RBX1. The CUL7-CUL9 heterodimer seems to interact specifically with p53/TP53. Interacts with FBXW8; interaction is mutually exclusive of binding to CUL9 or p53/TP53. Interacts with CUL9; leading to inhibited CUL9 activity. Interacts with OBSL1. Interacts (as part of the 3M complex) with HDAC4 and HDAC5; it is negatively regulated by ANKRA2.

It is found in the cytoplasm. It localises to the cytoskeleton. Its subcellular location is the microtubule organizing center. The protein localises to the centrosome. The protein resides in the perinuclear region. It is found in the golgi apparatus. Its pathway is protein modification; protein ubiquitination. Its function is as follows. Core component of the 3M and Cul7-RING(FBXW8) complexes, which mediate the ubiquitination and subsequent proteasomal degradation of target proteins. Core component of the 3M complex, a complex required to regulate microtubule dynamics and genome integrity. It is unclear how the 3M complex regulates microtubules, it could act by controlling the level of a microtubule stabilizer. The Cul7-RING(FBXW8) complex alone lacks ubiquitination activity and does not promote polyubiquitination and proteasomal degradation of p53/TP53. However it mediates recruitment of p53/TP53 for ubiquitination by neddylated CUL1-RBX1. Interaction with CUL9 is required to inhibit CUL9 activity and ubiquitination of BIRC5. The Cul7-RING(FBXW8) complex also mediates ubiquitination and consequent degradation of target proteins such as GORASP1, IRS1 and MAP4K1/HPK1. Ubiquitination of GORASP1 regulates Golgi morphogenesis and dendrite patterning in brain. Mediates ubiquitination and degradation of IRS1 in a mTOR-dependent manner: the Cul7-RING(FBXW8) complex recognizes and binds IRS1 previously phosphorylated by S6 kinase (RPS6KB1 or RPS6KB2). The Cul7-RING(FBXW8) complex also mediates ubiquitination of MAP4K1/HPK1: recognizes and binds autophosphorylated MAP4K1/HPK1, leading to its degradation, thereby affecting cell proliferation and differentiation. Acts as a regulator in trophoblast cell epithelial-mesenchymal transition and placental development. While the Cul7-RING(FBXW8) and the 3M complexes are associated and involved in common processes, CUL7 and the Cul7-RING(FBXW8) complex may have additional functions. Probably plays a role in the degradation of proteins involved in endothelial proliferation and/or differentiation. The sequence is that of Cullin-7 (CUL7) from Pongo abelii (Sumatran orangutan).